Consider the following 719-residue polypeptide: Polyribonucleotide nucleotidyltransferase (719 aa).

Residues Asp-507 and Asp-513 each contribute to the Mg(2+) site. The 61-residue stretch at 573–633 folds into the KH domain; it reads PKLELFSVDP…EQIKAAKDYI (61 aa). One can recognise an S1 motif domain in the interval 658–719; it reads GQEFQGIVKK…NGKISVDLCE (62 aa).

It belongs to the polyribonucleotide nucleotidyltransferase family. Requires Mg(2+) as cofactor.

Its subcellular location is the cytoplasm. It carries out the reaction RNA(n+1) + phosphate = RNA(n) + a ribonucleoside 5'-diphosphate. Involved in mRNA degradation. Catalyzes the phosphorolysis of single-stranded polyribonucleotides processively in the 3'- to 5'-direction. The polypeptide is Polyribonucleotide nucleotidyltransferase (Campylobacter jejuni subsp. jejuni serotype O:23/36 (strain 81-176)).